Reading from the N-terminus, the 132-residue chain is Large ribosomal subunit protein uL14 (132 aa).

It belongs to the universal ribosomal protein uL14 family. In terms of assembly, part of the 50S ribosomal subunit. Forms a cluster with proteins L3 and L24e, part of which may contact the 16S rRNA in 2 intersubunit bridges.

Functionally, binds to 23S rRNA. Forms part of two intersubunit bridges in the 70S ribosome. This Methanococcus aeolicus (strain ATCC BAA-1280 / DSM 17508 / OCM 812 / Nankai-3) protein is Large ribosomal subunit protein uL14.